The following is a 100-amino-acid chain: Virion membrane protein OPG135 (100 aa).

A signal peptide spans 1–22; it reads MSCYTAILKSVGGLALFQVANG. At 23-45 the chain is on the intravirion side; it reads AIDLCRHFFMYFCEQKLRPNSFW. A helical transmembrane segment spans residues 46-66; that stretch reads FVVVRAIASMIMYLVLGIALL. The Virion surface portion of the chain corresponds to 67 to 83; the sequence is YISEQDDKKNTNNDSNS. The interval 75–100 is disordered; it reads KNTNNDSNSNNDKRNVSSINSNSSHK. N-linked (GlcNAc...) asparagine; by host glycosylation is found at asparagine 79, asparagine 89, and asparagine 96.

Belongs to the chordopoxvirinae A9 family.

The protein resides in the virion membrane. It is found in the host cytoplasm. In terms of biological role, envelope protein. Required for an early step in virion morphogenesis. The sequence is that of Virion membrane protein OPG135 (OPG135) from Monkeypox virus.